The sequence spans 319 residues: Coiled-coil domain-containing protein PF3D7_1144200 (319 aa).

A compositionally biased stretch (basic and acidic residues) spans 1 to 12 (MSEEHSNDHIED). 2 disordered regions span residues 1 to 43 (MSEE…SESS) and 112 to 158 (KLEK…NQHN). Positions 16 to 26 (CSQNCDETNSP) are enriched in polar residues. Basic and acidic residues-rich tracts occupy residues 27-36 (KNEKDEKDFK) and 112-131 (KLEKEKEKNEKKEKKEKKVT). Coiled coils occupy residues 100–134 (DLANKKENKTKFKLEKEKEKNEKKEKKEKKVTNDS), 166–242 (ELNE…IKKN), and 281–310 (NSNCEQIQNVRDEFAELKNDLNKIMNLINI). Residues 132–150 (NDSTNNKNKNNSVPFLNEN) are compositionally biased toward low complexity.

The polypeptide is Coiled-coil domain-containing protein PF3D7_1144200 (Plasmodium falciparum (isolate 3D7)).